Here is a 260-residue protein sequence, read N- to C-terminus: Serine hydroxymethyltransferase (260 aa).

Lysine 60 is modified (N6-(pyridoxal phosphate)lysine).

It belongs to the SHMT family. Homodimer. Requires pyridoxal 5'-phosphate as cofactor.

The protein resides in the cytoplasm. The catalysed reaction is (6R)-5,10-methylene-5,6,7,8-tetrahydrofolate + glycine + H2O = (6S)-5,6,7,8-tetrahydrofolate + L-serine. Its pathway is one-carbon metabolism; tetrahydrofolate interconversion. It functions in the pathway amino-acid biosynthesis; glycine biosynthesis; glycine from L-serine: step 1/1. In terms of biological role, catalyzes the reversible interconversion of serine and glycine with tetrahydrofolate (THF) serving as the one-carbon carrier. This reaction serves as the major source of one-carbon groups required for the biosynthesis of purines, thymidylate, methionine, and other important biomolecules. Also exhibits THF-independent aldolase activity toward beta-hydroxyamino acids, producing glycine and aldehydes, via a retro-aldol mechanism. This chain is Serine hydroxymethyltransferase, found in Corynebacterium sp. (strain P-1).